The primary structure comprises 111 residues: UPF0060 membrane protein Ajs_1473 (111 aa).

4 consecutive transmembrane segments (helical) span residues 8 to 28 (ILFAVTAVAEIVGCYLPWLVV), 33 to 53 (SAWLLLPAAVSLSLFAWLLTL), 65 to 85 (YGGMYIAVALVWLHVVDGVAL), and 88 to 108 (WDFVGAAIALAGMSVIALQPA).

This sequence belongs to the UPF0060 family.

The protein localises to the cell inner membrane. The polypeptide is UPF0060 membrane protein Ajs_1473 (Acidovorax sp. (strain JS42)).